Consider the following 490-residue polypeptide: GTPase Der (490 aa).

EngA-type G domains lie at 3-166 (PVVA…MDDV) and 203-376 (IKLA…DSST). GTP-binding positions include 9-16 (GRPNVGKS), 56-60 (DTGGI), 118-121 (NKTD), 209-216 (GRPNVGKS), 256-260 (DTAGV), and 321-324 (NKWD). The region spanning 377–461 (RRVSTAMLTR…PIRIQFKEGE (85 aa)) is the KH-like domain.

It belongs to the TRAFAC class TrmE-Era-EngA-EngB-Septin-like GTPase superfamily. EngA (Der) GTPase family. In terms of assembly, associates with the 50S ribosomal subunit.

Its function is as follows. GTPase that plays an essential role in the late steps of ribosome biogenesis. This chain is GTPase Der, found in Salmonella newport (strain SL254).